The primary structure comprises 213 residues: MDTLWDISPPVSPATPVWPGDTPVSVERVWRMEAGSPVNVARLTLSPHTGAHCDAPLHYDADGAPIGAVPLDTYLGPCRVIHCIGAAPVVRPADIEAALDGVPPRVLLRTYARASVEQWDSGFCAVAPETVDLLAARGVKLIGIDTPSLDPQESKTMDAHHRVRAHRMAILEGIVLDDVPPGDYELIALPLKFTTLDASPVRAVLRALPGHSA.

W18 contacts substrate. Zn(2+) contacts are provided by H48, H52, and D54. H58 functions as the Proton donor/acceptor in the catalytic mechanism. 2 residues coordinate Zn(2+): H160 and E172.

This sequence belongs to the Cyclase 1 superfamily. KynB family. In terms of assembly, homodimer. Zn(2+) serves as cofactor.

It carries out the reaction N-formyl-L-kynurenine + H2O = L-kynurenine + formate + H(+). The protein operates within amino-acid degradation; L-tryptophan degradation via kynurenine pathway; L-kynurenine from L-tryptophan: step 2/2. Catalyzes the hydrolysis of N-formyl-L-kynurenine to L-kynurenine, the second step in the kynurenine pathway of tryptophan degradation. The chain is Kynurenine formamidase from Burkholderia ambifaria (strain MC40-6).